A 124-amino-acid polypeptide reads, in one-letter code: Fluoride-specific ion channel FluC (124 aa).

4 consecutive transmembrane segments (helical) span residues 4–24 (ILAI…LAGG), 32–52 (AFPW…GLIM), 68–88 (GLTI…YETF), and 101–121 (LNVL…IMAA). The Na(+) site is built by Gly75 and Thr78.

It belongs to the fluoride channel Fluc/FEX (TC 1.A.43) family.

The protein resides in the cell inner membrane. The enzyme catalyses fluoride(in) = fluoride(out). With respect to regulation, na(+) is not transported, but it plays an essential structural role and its presence is essential for fluoride channel function. In terms of biological role, fluoride-specific ion channel. Important for reducing fluoride concentration in the cell, thus reducing its toxicity. The sequence is that of Fluoride-specific ion channel FluC from Geobacter sulfurreducens (strain ATCC 51573 / DSM 12127 / PCA).